The following is a 222-amino-acid chain: Deoxyribose-phosphate aldolase (222 aa).

The Proton donor/acceptor role is filled by aspartate 92. Residue lysine 156 is the Schiff-base intermediate with acetaldehyde of the active site. Catalysis depends on lysine 185, which acts as the Proton donor/acceptor.

It belongs to the DeoC/FbaB aldolase family. DeoC type 1 subfamily. In terms of assembly, homodimer.

The protein resides in the cytoplasm. The enzyme catalyses 2-deoxy-D-ribose 5-phosphate = D-glyceraldehyde 3-phosphate + acetaldehyde. The protein operates within carbohydrate degradation; 2-deoxy-D-ribose 1-phosphate degradation; D-glyceraldehyde 3-phosphate and acetaldehyde from 2-deoxy-alpha-D-ribose 1-phosphate: step 2/2. Shows high stability to high concentrations of acetaldehyde. Its function is as follows. Catalyzes a reversible aldol reaction between acetaldehyde and D-glyceraldehyde 3-phosphate to generate 2-deoxy-D-ribose 5-phosphate. In Aciduliprofundum boonei (strain DSM 19572 / T469), this protein is Deoxyribose-phosphate aldolase.